The chain runs to 424 residues: CinA-like protein (424 aa).

The protein belongs to the CinA family.

In Shewanella baltica (strain OS195), this protein is CinA-like protein.